Reading from the N-terminus, the 85-residue chain is Putative membrane protein insertion efficiency factor (85 aa).

Belongs to the UPF0161 family.

The protein resides in the cell membrane. Functionally, could be involved in insertion of integral membrane proteins into the membrane. The protein is Putative membrane protein insertion efficiency factor of Baumannia cicadellinicola subsp. Homalodisca coagulata.